Consider the following 478-residue polypeptide: PRAME family member 26 (478 aa).

One copy of the LRR 1; degenerate repeat lies at 99-126 (RWKLQVLDLQDVCENFWMVWSEAMARGC). Residues 181–205 (HLCCKKLKILGMPFRNIRSILKMVN) form an LRR 2; degenerate repeat. An LRR 3; degenerate repeat occupies 206 to 232 (LDCIQEVEVNCKWVLPILTQFTPYLGH). An LRR 4; degenerate repeat occupies 233–268 (MRNLQKLVLSHMDVSRYVSPEQKKEIVTQFTTQFLK). 5 LRR repeats span residues 269-294 (LHCLQKLYMNSVSFLEGHLDQLLSCL), 295-326 (KTSLKVLTITNCVLLESDLKHLSQCPSISQLK), 327-347 (TLDLSGIRLTNYSLVPLQILL), 351-378 (AATLEYLDLDDCGIIDSQVNAILPALSR), and 379-403 (CFELNTFSFCGNPISMATLENLLSH).

The protein belongs to the PRAME family.

This is PRAME family member 26 from Homo sapiens (Human).